The following is a 389-amino-acid chain: Chalcone synthase 8 (389 aa).

Cys-164 is an active-site residue.

This sequence belongs to the thiolase-like superfamily. Chalcone/stilbene synthases family.

It catalyses the reaction (E)-4-coumaroyl-CoA + 3 malonyl-CoA + 3 H(+) = 2',4,4',6'-tetrahydroxychalcone + 3 CO2 + 4 CoA. It participates in secondary metabolite biosynthesis; flavonoid biosynthesis. Functionally, the primary product of this enzyme is 4,2',4',6'-tetrahydroxychalcone (also termed naringenin-chalcone or chalcone) which can under specific conditions spontaneously isomerize into naringenin. The protein is Chalcone synthase 8 (CHS8) of Medicago sativa (Alfalfa).